A 366-amino-acid chain; its full sequence is Variable large protein 10 (366 aa).

Residues 1–18 (MRKRISAIIMTLFMVLAS) form the signal peptide. The N-palmitoyl cysteine moiety is linked to residue C19. A lipid anchor (S-diacylglycerol cysteine) is attached at C19.

This sequence belongs to the variable large protein (Vlp) family. Beta subfamily.

The protein localises to the cell outer membrane. The Vlp and Vsp proteins are antigenically distinct proteins, only one vlp or vsp gene is transcriptionally active at any one time. Switching between these genes is a mechanism of host immune response evasion. The sequence is that of Variable large protein 10 from Borrelia hermsii.